Reading from the N-terminus, the 204-residue chain is Superoxide dismutase [Mn] (204 aa).

His27 is a Mn(2+) binding site. Residues Thr34 and Thr70 each carry the phosphothreonine modification. Mn(2+) contacts are provided by His82, Asp164, and His168.

It belongs to the iron/manganese superoxide dismutase family. Homodimer. The cofactor is Mn(2+).

It catalyses the reaction 2 superoxide + 2 H(+) = H2O2 + O2. In terms of biological role, destroys superoxide anion radicals which are normally produced within the cells and which are toxic to biological systems. This is Superoxide dismutase [Mn] (sodA) from Bacillus caldotenax.